Here is a 147-residue protein sequence, read N- to C-terminus: Bis(5'-nucleosyl)-tetraphosphatase [asymmetrical] (147 aa).

Positions 1-139 constitute a Nudix hydrolase domain; that stretch reads MALRACGLII…EMKAALQEGH (139 aa). Alanine 2 is modified (N-acetylalanine). Residues 43–64 carry the Nudix box motif; that stretch reads GHVEPGEDDLETALRETQEEAG.

It belongs to the Nudix hydrolase family. It depends on a divalent metal cation as a cofactor.

It carries out the reaction P(1),P(4)-bis(5'-guanosyl) tetraphosphate + H2O = GMP + GTP + 2 H(+). It catalyses the reaction a 5'-end CoA-ribonucleoside in mRNA + H2O = a 5'-end phospho-adenosine-phospho-ribonucleoside in mRNA + (R)-4'-phosphopantetheine + 2 H(+). The enzyme catalyses a 5'-end FAD-phospho-ribonucleoside in mRNA + H2O = a 5'-end phospho-adenosine-phospho-ribonucleoside in mRNA + FMN + 2 H(+). Functionally, catalyzes the asymmetric hydrolysis of diadenosine 5',5'''-P1,P4-tetraphosphate (Ap4A) to yield AMP and ATP. Exhibits decapping activity towards FAD-capped RNAs and dpCoA-capped RNAs in vitro. This chain is Bis(5'-nucleosyl)-tetraphosphatase [asymmetrical] (NUDT2), found in Homo sapiens (Human).